We begin with the raw amino-acid sequence, 910 residues long: Bifunctional glucose-6-phosphate 1-dehydrogenase/6-phosphogluconolactonase (910 aa).

Positions 1–170 (MDYENFVKSA…DFHIASLFPN (170 aa)) are 6-phosphogluconolactonase. Residues 171-276 (IFYNIYMNNY…PATYLIDTSC (106 aa)) form a linker region. Positions 277 to 910 (TNENVNINNN…FYEDDLLDIN (634 aa)) are glucose-6-phosphate 1-dehydrogenase. NADP(+) is bound by residues 345 to 352 (GCSGDLAK), arginine 379, and lysine 548. Residues lysine 548, 578–582 (HYLGK), glutamate 616, and aspartate 635 each bind D-glucose 6-phosphate. Histidine 640 serves as the catalytic Proton acceptor. The disordered stretch occupies residues 689-711 (ENFKEDENNDDESKKNHSYHDDP). Lysine 742 lines the NADP(+) pocket. Lysine 745 lines the D-glucose 6-phosphate pocket. Arginine 755 provides a ligand contact to NADP(+). D-glucose 6-phosphate is bound at residue glutamine 779. 785–787 (YLK) serves as a coordination point for NADP(+).

The protein in the N-terminal section; belongs to the glucosamine/galactosamine-6-phosphate isomerase family. 6-phosphogluconolactonase subfamily. This sequence in the C-terminal section; belongs to the glucose-6-phosphate dehydrogenase family. Homotetramer.

The catalysed reaction is 6-phospho-D-glucono-1,5-lactone + H2O = 6-phospho-D-gluconate + H(+). It catalyses the reaction D-glucose 6-phosphate + NADP(+) = 6-phospho-D-glucono-1,5-lactone + NADPH + H(+). It participates in carbohydrate degradation; pentose phosphate pathway; D-ribulose 5-phosphate from D-glucose 6-phosphate (oxidative stage): step 1/3. Its pathway is carbohydrate degradation; pentose phosphate pathway; D-ribulose 5-phosphate from D-glucose 6-phosphate (oxidative stage): step 2/3. G6PD activity is inhibited by glucosamine-6-phosphate, NADPH, and 4-(4-bromophenyl)-7-(3,4-dimethoxyphenyl)-4,6,7,8-tetrahydroquinoline-2,5(1 H,3H)-dione. G6PD and 6PGL activities can be reversibly inhibited by S-glutathionylation (in vitro). Bifunctional enzyme which catalyzes the first two steps of the oxidative pentose-phosphate pathway, which represents a route for the dissimilation of carbohydrates besides glycolysis. The main function of this enzyme is to provide reducing power (NADPH) and pentose phosphates for fatty acid and nucleic acid synthesis. The sequence is that of Bifunctional glucose-6-phosphate 1-dehydrogenase/6-phosphogluconolactonase from Plasmodium falciparum (isolate 3D7).